We begin with the raw amino-acid sequence, 406 residues long: Elongation factor Tu (406 aa).

Residues 10–215 (KPHVNVGTIG…AIDEYIPTPV (206 aa)) form the tr-type G domain. The segment at 19–26 (GHVDHGKT) is G1. Position 19–26 (19–26 (GHVDHGKT)) interacts with GTP. Thr26 serves as a coordination point for Mg(2+). Residues 61–65 (GITIN) form a G2 region. The segment at 82–85 (DCPG) is G3. GTP is bound by residues 82–86 (DCPGH) and 137–140 (NKVD). Residues 137 to 140 (NKVD) are G4. Positions 175 to 177 (SAL) are G5.

The protein belongs to the TRAFAC class translation factor GTPase superfamily. Classic translation factor GTPase family. EF-Tu/EF-1A subfamily. As to quaternary structure, monomer.

The protein localises to the cytoplasm. The catalysed reaction is GTP + H2O = GDP + phosphate + H(+). In terms of biological role, GTP hydrolase that promotes the GTP-dependent binding of aminoacyl-tRNA to the A-site of ribosomes during protein biosynthesis. The chain is Elongation factor Tu from Thermus thermophilus (strain ATCC BAA-163 / DSM 7039 / HB27).